The primary structure comprises 913 residues: Chitin synthase 1 (913 aa).

The interval 1-135 (MAYRGGGPND…QQPGAQTGGL (135 aa)) is disordered. N-linked (GlcNAc...) asparagine glycosylation is present at Asn-25. A compositionally biased stretch (basic and acidic residues) spans 41-56 (RDPHARGTSPYEHHLG). The N-linked (GlcNAc...) asparagine glycan is linked to Asn-539. The next 7 helical transmembrane spans lie at 566–586 (FFFHIQLIYNVLNVIFTWFSL), 625–645 (IINSILQYLYLAFLVIQFVLA), 658–678 (IASFIVFGFIQTYILVLSGYL), 712–732 (VILVALVTIYGLNFIASFMYL), 740–760 (SFPYYLVLMSTYINILMVYAF), 840–860 (TGLVVSWLFSNAALIVFITTD), and 881–901 (FLLYSTAVLALVRFTGFLWFL).

It belongs to the chitin synthase family. Class III subfamily.

Its subcellular location is the cell membrane. It catalyses the reaction [(1-&gt;4)-N-acetyl-beta-D-glucosaminyl](n) + UDP-N-acetyl-alpha-D-glucosamine = [(1-&gt;4)-N-acetyl-beta-D-glucosaminyl](n+1) + UDP + H(+). In terms of biological role, polymerizes chitin, a structural polymer of the cell wall and septum, by transferring the sugar moiety of UDP-GlcNAc to the non-reducing end of the growing chitin polymer. Plays a role in cell wall integrity and is involved in tolerance to hyperosmotic conditions. Required to successfully penetrate the host plants and thus plays a key role in pathogenicity. This chain is Chitin synthase 1, found in Verticillium dahliae (strain VdLs.17 / ATCC MYA-4575 / FGSC 10137) (Verticillium wilt).